The chain runs to 239 residues: Increased recombination centers protein 22-1 (239 aa).

The signal sequence occupies residues 1 to 19 (MKLSTIFTAFAATIATVAG). The Lumenal portion of the chain corresponds to 20–161 (YETTGSKQTV…AAVSFFDPRL (142 aa)). The chain crosses the membrane as a helical span at residues 162-182 (IFLELVLLITFAGLIYVGYEI). Topologically, residues 183–239 (WGKQYFKGVASVKAKKVSAAKASSPVASGPSTTSATGYDTNWIPESHLKQKKTKKVN) are cytoplasmic. Positions 201–213 (AAKASSPVASGPS) are enriched in low complexity. Residues 201–222 (AAKASSPVASGPSTTSATGYDT) form a disordered region.

Belongs to the IRC22 family.

Its subcellular location is the endoplasmic reticulum membrane. In terms of biological role, is probably involved in a pathway contributing to genomic integrity. This Candida albicans (strain WO-1) (Yeast) protein is Increased recombination centers protein 22-1 (IRC22-1).